The sequence spans 246 residues: 1-(5-phosphoribosyl)-5-[(5-phosphoribosylamino)methylideneamino] imidazole-4-carboxamide isomerase (246 aa).

Aspartate 8 functions as the Proton acceptor in the catalytic mechanism. The Proton donor role is filled by aspartate 130.

This sequence belongs to the HisA/HisF family.

The protein localises to the cytoplasm. The catalysed reaction is 1-(5-phospho-beta-D-ribosyl)-5-[(5-phospho-beta-D-ribosylamino)methylideneamino]imidazole-4-carboxamide = 5-[(5-phospho-1-deoxy-D-ribulos-1-ylimino)methylamino]-1-(5-phospho-beta-D-ribosyl)imidazole-4-carboxamide. The protein operates within amino-acid biosynthesis; L-histidine biosynthesis; L-histidine from 5-phospho-alpha-D-ribose 1-diphosphate: step 4/9. The sequence is that of 1-(5-phosphoribosyl)-5-[(5-phosphoribosylamino)methylideneamino] imidazole-4-carboxamide isomerase from Shigella dysenteriae serotype 1 (strain Sd197).